The chain runs to 63 residues: Sperm protamine P1 (63 aa).

Residues 1–63 (MARYRRHSRS…RYSRRGRRRY (63 aa)) form a disordered region.

It belongs to the protamine P1 family. As to expression, testis.

The protein localises to the nucleus. The protein resides in the chromosome. Protamines substitute for histones in the chromatin of sperm during the haploid phase of spermatogenesis. They compact sperm DNA into a highly condensed, stable and inactive complex. The sequence is that of Sperm protamine P1 (PRM1) from Phascogale tapoatafa (Common wambenger).